The chain runs to 398 residues: Cathepsin D (398 aa).

The N-terminal stretch at 1 to 20 (MAPRGLLVLLLLALVGPCAA) is a signal peptide. Residues 21 to 63 (LIRIPLTKFTSTRRMLTEVGSEIPDMNAITQFLKFKLGFADLA) constitute a propeptide, activation peptide. Residues 78 to 395 (YYGEIGIGTP…DRDNDSVGFA (318 aa)) enclose the Peptidase A1 domain. Aspartate 96 is an active-site residue. A disulfide bridge links cysteine 109 with cysteine 116. Asparagine 133 and asparagine 251 each carry an N-linked (GlcNAc...) asparagine glycan. Cysteine 274 and cysteine 278 are oxidised to a cystine. The active site involves aspartate 283. Cysteine 317 and cysteine 354 are joined by a disulfide.

It belongs to the peptidase A1 family. As to quaternary structure, consists of a light chain and a heavy chain. Oocytic yolk, preovulatory follicles, liver.

The protein resides in the lysosome. It carries out the reaction Specificity similar to, but narrower than, that of pepsin A. Does not cleave the 4-Gln-|-His-5 bond in B chain of insulin.. Functionally, acid protease active in intracellular protein breakdown. In chicken it is a key enzyme for yolk formation as it is capable of catalyzing intra oocytic break down of protein components of both vitellogenin and VLDL. The protein is Cathepsin D (CTSD) of Gallus gallus (Chicken).